Consider the following 811-residue polypeptide: MSDQPPPYTPLPLLSSFPPNPYPDQTPDPASTPTLVLPNPAFPNKRKRTGFRRKLPSGSPAAPVAVAASPSAQPPPRASAADDIIVINREPTAEAVTALTAGFPADSLTDEEIEAGVVSDVGGIEQVNYILIRNHLLTRWRETFNSWLAKESFATLIPPHCDHLLNAAYSFLVSHGHINFGVAPAIKERIPKEPTRHNTVIVVGAGLAGLAAARQLVAFGFKVVVLEGRKRCGGRVYTKKMEGGGRSAAGDLGGSVLTGTFGNPLGIVAKQLGLPMHKIRDKCPLYRPDGSPVDPEVDKKVEGTFNKLLDKSSLLRASMGDVAMDVSLGAALETLRQTDGDLSTDQEMNLFNWHLANLEYANAGLLSKLSLAFWDQDDPYDMVGDHCFLPGGNGRLVQSLAENVPIVYERTVHTIRYGGDGVQVVVNGGQVYEGDMALCTVPLGVLKNGGVKFVPELPQRKLDSIKRLGFGLLNKVAMLFPHVFWSTDLDTFGHLTEDPSHRGEFFLFYSYATVAGGPLLMALVAGEAAHNFETTPPTDAVSSVLKILRGIYEPQGIEVPDPLQSVCTRWGTDSFSLGSYSHVAVGASGDDYDILAESVGDGRLFFAGEATTRRYPATMHGAFISGLREAANITLHANARAAKSKVEKGPSTNTQACAALLMDLFRQPDLEFGSFSVIFGGQASDPKSPAILKVELGGPRKKGATEGGKADQHHSNKLLFQQLQSHFNQQQQLYVYTLLSRQQAMELREVRGGDEMRLHYLCEKLGVKLVGRKGLGPGADAVIASIKAERNSSRTKTRPSKLKIGIPKSKS.

Residues 1-10 (MSDQPPPYTP) are compositionally biased toward pro residues. A disordered region spans residues 1–79 (MSDQPPPYTP…PSAQPPPRAS (79 aa)). The span at 44 to 55 (NKRKRTGFRRKL) shows a compositional bias: basic residues. A compositionally biased stretch (low complexity) spans 56–71 (PSGSPAAPVAVAASPS). An SWIRM domain is found at 88-189 (NREPTAEAVT…FGVAPAIKER (102 aa)). Positions 227, 229, 235, and 609 each coordinate FAD. The tract at residues 790–811 (RNSSRTKTRPSKLKIGIPKSKS) is disordered.

The protein belongs to the flavin monoamine oxidase family. It depends on FAD as a cofactor.

In terms of biological role, probable histone demethylase. The protein is Lysine-specific histone demethylase 1 homolog 3 of Oryza sativa subsp. japonica (Rice).